Here is a 214-residue protein sequence, read N- to C-terminus: Probable transaldolase (214 aa).

The Schiff-base intermediate with substrate role is filled by Lys83.

This sequence belongs to the transaldolase family. Type 3B subfamily.

It localises to the cytoplasm. The catalysed reaction is D-sedoheptulose 7-phosphate + D-glyceraldehyde 3-phosphate = D-erythrose 4-phosphate + beta-D-fructose 6-phosphate. The protein operates within carbohydrate degradation; pentose phosphate pathway; D-glyceraldehyde 3-phosphate and beta-D-fructose 6-phosphate from D-ribose 5-phosphate and D-xylulose 5-phosphate (non-oxidative stage): step 2/3. In terms of biological role, transaldolase is important for the balance of metabolites in the pentose-phosphate pathway. The polypeptide is Probable transaldolase (Streptococcus equi subsp. zooepidemicus (strain H70)).